Consider the following 309-residue polypeptide: Homoserine O-succinyltransferase (309 aa).

The Acyl-thioester intermediate role is filled by Cys-142. Substrate-binding residues include Lys-163 and Ser-192. His-235 acts as the Proton acceptor in catalysis. Glu-237 is a catalytic residue. Arg-249 provides a ligand contact to substrate.

It belongs to the MetA family. As to quaternary structure, homodimer.

The protein resides in the cytoplasm. The catalysed reaction is L-homoserine + succinyl-CoA = O-succinyl-L-homoserine + CoA. It participates in amino-acid biosynthesis; L-methionine biosynthesis via de novo pathway; O-succinyl-L-homoserine from L-homoserine: step 1/1. In terms of biological role, transfers a succinyl group from succinyl-CoA to L-homoserine, forming succinyl-L-homoserine. The protein is Homoserine O-succinyltransferase of Escherichia coli O17:K52:H18 (strain UMN026 / ExPEC).